Here is a 400-residue protein sequence, read N- to C-terminus: D(3) dopamine receptor (400 aa).

The Extracellular portion of the chain corresponds to Met-1 to Tyr-32. Asn-12 and Asn-19 each carry an N-linked (GlcNAc...) asparagine glycan. The chain crosses the membrane as a helical span at residues Ala-33 to Leu-55. Residues Lys-56–Asn-65 are Cytoplasmic-facing. Residues Tyr-66–Tyr-88 traverse the membrane as a helical segment. Residues Leu-89–Asp-104 lie on the Extracellular side of the membrane. A glycan (N-linked (GlcNAc...) asparagine) is linked at Asn-97. An intrachain disulfide couples Cys-103 to Cys-181. The helical transmembrane segment at Val-105–Ile-126 threads the bilayer. Asp-110 contacts eticlopride. Residues Asp-127 to Arg-149 are Cytoplasmic-facing. A helical transmembrane segment spans residues Val-150–Phe-170. The Extracellular portion of the chain corresponds to Gly-171–Asp-187. Asn-173 is a glycosylation site (N-linked (GlcNAc...) asparagine). A helical transmembrane segment spans residues Phe-188 to Ala-209. Over Arg-210 to Gln-329 the chain is Cytoplasmic. A helical transmembrane segment spans residues Met-330–Leu-351. Eticlopride contacts are provided by Phe-345 and His-349. Topologically, residues Asn-352–Ser-366 are extracellular. The cysteines at positions 355 and 358 are disulfide-linked. The helical transmembrane segment at Ala-367–Phe-386 threads the bilayer. Over Asn-387–Cys-400 the chain is Cytoplasmic.

The protein belongs to the G-protein coupled receptor 1 family. As to quaternary structure, interacts with CLIC6. Interacts with GRK4. Interacts with PALM. Interacts with FLNA (via filamin repeat 21); increases PKA-mediated phosphorylation of FLNA. Phosphorylated by GRK4 (GRK4-alpha and GRK4-gamma). In terms of processing, palmitoylated. Brain.

It localises to the cell membrane. Dopamine receptor whose activity is mediated by G proteins which inhibit adenylyl cyclase. Promotes cell proliferation. The polypeptide is D(3) dopamine receptor (Homo sapiens (Human)).